We begin with the raw amino-acid sequence, 323 residues long: Putative CDC123-like protein L884 (323 aa).

It belongs to the CDC123 family.

The polypeptide is Putative CDC123-like protein L884 (Acanthamoeba polyphaga mimivirus (APMV)).